The primary structure comprises 37 residues: Large ribosomal subunit protein bL36 (37 aa).

This sequence belongs to the bacterial ribosomal protein bL36 family.

This chain is Large ribosomal subunit protein bL36, found in Synechococcus sp. (strain CC9605).